A 185-amino-acid chain; its full sequence is Ribosome-recycling factor (185 aa).

The protein belongs to the RRF family.

The protein resides in the cytoplasm. Functionally, responsible for the release of ribosomes from messenger RNA at the termination of protein biosynthesis. May increase the efficiency of translation by recycling ribosomes from one round of translation to another. This Streptococcus pneumoniae serotype 19F (strain G54) protein is Ribosome-recycling factor.